We begin with the raw amino-acid sequence, 269 residues long: tRNA-cytidine(32) 2-sulfurtransferase (269 aa).

The short motif at 53-58 is the PP-loop motif element; that stretch reads SGGKDS. Positions 128, 131, and 218 each coordinate [4Fe-4S] cluster.

Belongs to the TtcA family. As to quaternary structure, homodimer. Mg(2+) serves as cofactor. It depends on [4Fe-4S] cluster as a cofactor.

Its subcellular location is the cytoplasm. It carries out the reaction cytidine(32) in tRNA + S-sulfanyl-L-cysteinyl-[cysteine desulfurase] + AH2 + ATP = 2-thiocytidine(32) in tRNA + L-cysteinyl-[cysteine desulfurase] + A + AMP + diphosphate + H(+). It functions in the pathway tRNA modification. In terms of biological role, catalyzes the ATP-dependent 2-thiolation of cytidine in position 32 of tRNA, to form 2-thiocytidine (s(2)C32). The sulfur atoms are provided by the cysteine/cysteine desulfurase (IscS) system. The sequence is that of tRNA-cytidine(32) 2-sulfurtransferase from Pelobacter propionicus (strain DSM 2379 / NBRC 103807 / OttBd1).